The sequence spans 94 residues: MSKTLTDPELQTALGSLHGWAKNGIAIERKYEFKDFLEAMKFVNKVADAAEAAGHHPDIQIVYSRVTLQLTSHDSGGVTHRDIKMAGRLNEIHP.

It belongs to the pterin-4-alpha-carbinolamine dehydratase family.

It carries out the reaction (4aS,6R)-4a-hydroxy-L-erythro-5,6,7,8-tetrahydrobiopterin = (6R)-L-erythro-6,7-dihydrobiopterin + H2O. The protein is Putative pterin-4-alpha-carbinolamine dehydratase of Koribacter versatilis (strain Ellin345).